Here is a 572-residue protein sequence, read N- to C-terminus: Proline--tRNA ligase (572 aa).

The protein belongs to the class-II aminoacyl-tRNA synthetase family. ProS type 1 subfamily. In terms of assembly, homodimer.

Its subcellular location is the cytoplasm. The enzyme catalyses tRNA(Pro) + L-proline + ATP = L-prolyl-tRNA(Pro) + AMP + diphosphate. Its function is as follows. Catalyzes the attachment of proline to tRNA(Pro) in a two-step reaction: proline is first activated by ATP to form Pro-AMP and then transferred to the acceptor end of tRNA(Pro). As ProRS can inadvertently accommodate and process non-cognate amino acids such as alanine and cysteine, to avoid such errors it has two additional distinct editing activities against alanine. One activity is designated as 'pretransfer' editing and involves the tRNA(Pro)-independent hydrolysis of activated Ala-AMP. The other activity is designated 'posttransfer' editing and involves deacylation of mischarged Ala-tRNA(Pro). The misacylated Cys-tRNA(Pro) is not edited by ProRS. This is Proline--tRNA ligase from Escherichia fergusonii (strain ATCC 35469 / DSM 13698 / CCUG 18766 / IAM 14443 / JCM 21226 / LMG 7866 / NBRC 102419 / NCTC 12128 / CDC 0568-73).